A 204-amino-acid chain; its full sequence is Small ribosomal subunit protein uS4 (204 aa).

Positions 25–45 are disordered; that stretch reads AVPSRRAYPPGQHGQARKKRS. Residues 92 to 152 enclose the S4 RNA-binding domain; that stretch reads MRLDNIIFRL…NKENSRRLAE (61 aa).

The protein belongs to the universal ribosomal protein uS4 family. As to quaternary structure, part of the 30S ribosomal subunit. Contacts protein S5. The interaction surface between S4 and S5 is involved in control of translational fidelity.

Functionally, one of the primary rRNA binding proteins, it binds directly to 16S rRNA where it nucleates assembly of the body of the 30S subunit. With S5 and S12 plays an important role in translational accuracy. The sequence is that of Small ribosomal subunit protein uS4 from Cyanothece sp. (strain PCC 7425 / ATCC 29141).